The primary structure comprises 234 residues: Sugar fermentation stimulation protein A (234 aa).

The segment at residues 201-220 (LLSEAQNKGVEVLAYKAELS) is a DNA-binding region (H-T-H motif).

Belongs to the SfsA family.

Binds to DNA non-specifically. Could be a regulatory factor involved in maltose metabolism. The polypeptide is Sugar fermentation stimulation protein A (Salmonella dublin (strain CT_02021853)).